A 79-amino-acid polypeptide reads, in one-letter code: Cell division protein ZapB (79 aa).

Residues 4 to 78 (EVFEKLEAKV…LQALLGKMEE (75 aa)) are a coiled coil.

This sequence belongs to the ZapB family. As to quaternary structure, homodimer. The ends of the coiled-coil dimer bind to each other, forming polymers. Interacts with FtsZ.

The protein localises to the cytoplasm. Functionally, non-essential, abundant cell division factor that is required for proper Z-ring formation. It is recruited early to the divisome by direct interaction with FtsZ, stimulating Z-ring assembly and thereby promoting cell division earlier in the cell cycle. Its recruitment to the Z-ring requires functional FtsA or ZipA. In Cronobacter sakazakii (strain ATCC BAA-894) (Enterobacter sakazakii), this protein is Cell division protein ZapB.